The sequence spans 122 residues: Spermidine export protein MdtJ (122 aa).

4 helical membrane-spanning segments follow: residues 1-21 (MIYWIFLGLAIATEIIGTLSM), 31-51 (TGHIVMYVMITASYVMLSMAV), 54-74 (VALGVAYALWEGIGILFITLF), and 81-101 (EPISALKVLGLVTLIVGIMLV).

It belongs to the drug/metabolite transporter (DMT) superfamily. Small multidrug resistance (SMR) (TC 2.A.7.1) family. MdtJ subfamily. As to quaternary structure, forms a complex with MdtI.

The protein resides in the cell inner membrane. Catalyzes the excretion of spermidine. In Serratia proteamaculans (strain 568), this protein is Spermidine export protein MdtJ.